We begin with the raw amino-acid sequence, 35 residues long: Leukocyte cysteine proteinase inhibitor 2 (35 aa).

The segment at 1 to 35 is disordered; the sequence is LAGGLTEPRPADTEIQEIANKVKPQLEEKTNKKYD. The segment covering 24 to 35 has biased composition (basic and acidic residues); it reads PQLEEKTNKKYD.

It belongs to the cystatin family.

Its subcellular location is the cytoplasm. In terms of biological role, potent inhibitor of cathepsins L and S, and papain. This Sus scrofa (Pig) protein is Leukocyte cysteine proteinase inhibitor 2.